The chain runs to 63 residues: Large ribosomal subunit protein bL28 (63 aa).

The protein belongs to the bacterial ribosomal protein bL28 family.

This Beutenbergia cavernae (strain ATCC BAA-8 / DSM 12333 / CCUG 43141 / JCM 11478 / NBRC 16432 / NCIMB 13614 / HKI 0122) protein is Large ribosomal subunit protein bL28.